The chain runs to 411 residues: Elongation factor 1-gamma (411 aa).

Positions 3 to 84 constitute a GST N-terminal domain; it reads LTLWSGVNPE…HIARLDRSGG (82 aa). The GST C-terminal domain maps to 90–216; sequence TPLEGSQVDM…QGATFGAREG (127 aa). A disordered region spans residues 212–265; the sequence is GAREGGAKGQGRGCARPGREEAERAAAAADGAEEEDEAPREKKKPNPLDELPPS. Residues 214 to 223 are compositionally biased toward gly residues; that stretch reads REGGAKGQGR. One can recognise an EF-1-gamma C-terminal domain in the interval 255 to 411; sequence KPNPLDELPP…RPVLEGRVFK (157 aa).

In terms of assembly, EF-1 is composed of four subunits: alpha, beta, delta, and gamma.

Functionally, probably plays a role in anchoring the complex to other cellular components. The chain is Elongation factor 1-gamma from Trypanosoma cruzi.